Consider the following 961-residue polypeptide: Aconitate hydratase A (961 aa).

3 residues coordinate [4Fe-4S] cluster: cysteine 499, cysteine 565, and cysteine 568.

It belongs to the aconitase/IPM isomerase family. Monomer. It depends on [4Fe-4S] cluster as a cofactor.

The catalysed reaction is citrate = D-threo-isocitrate. It carries out the reaction (2S,3R)-3-hydroxybutane-1,2,3-tricarboxylate = 2-methyl-cis-aconitate + H2O. Its pathway is carbohydrate metabolism; tricarboxylic acid cycle; isocitrate from oxaloacetate: step 2/2. It participates in organic acid metabolism; propanoate degradation. Its function is as follows. Involved in the catabolism of short chain fatty acids (SCFA) via the tricarboxylic acid (TCA)(acetyl degradation route) and probably via the 2-methylcitrate cycle I (propionate degradation route). Catalyzes the reversible isomerization of citrate to isocitrate via cis-aconitate. The apo form of AcnA functions as a RNA-binding regulatory protein. Could catalyze the hydration of 2-methyl-cis-aconitate to yield (2R,3S)-2-methylisocitrate. This Mycobacterium avium protein is Aconitate hydratase A (acn).